The chain runs to 1403 residues: Nidogen-2 (1403 aa).

Residues 1-30 (MFRDPTAGWLTPPSPLSLLVMLLLLSRVGA) form the signal peptide. The region spanning 108–274 (PFLADIDTSH…GVWAFHIGSR (167 aa)) is the NIDO domain. Residues 323–403 (EDVEYPPVEP…KQGRPVGEGE (81 aa)) are disordered. O-linked (Xyl...) (chondroitin sulfate) serine glycosylation is found at S386 and S475. A compositionally biased stretch (polar residues) spans 386–395 (SASLDPQTKQ). Residues 507–547 (NLETCEHSHGRCSQHAFCTDYTTGFCCHCQSRFYGNGKHCL) form the EGF-like 1 domain. Cystine bridges form between C511/C524, C518/C533, and C535/C546. Residues 551 to 781 (APHRVNGKVS…GPVEVDSAPV (231 aa)) enclose the Nidogen G2 beta-barrel domain. 3 N-linked (GlcNAc...) asparagine glycosylation sites follow: N681, N716, and N726. The region spanning 782 to 823 (GVNPCYDGSHTCDTTARCHPGTGVDYTCECTPGFQGDGRSCV) is the EGF-like 2 domain. Disulfide bonds link C786–C799, C793–C809, C811–C822, C828–C841, C835–C850, C852–C865, C875–C890, C882–C900, C902–C913, C919–C930, C924–C939, C941–C952, C968–C991, C1002–C1009, C1011–C1033, C1047–C1071, C1082–C1089, and C1091–C1112. One can recognise an EGF-like 3; calcium-binding domain in the interval 824 to 862 (DVNECATGFHRCGPNSVCVNLVGSYRCECRSGYEFADDQ). In terms of domain architecture, EGF-like 4 spans 871-914 (PPNPCLDGSHTCAPEGQARCIHHGGSSFSCACLPGFIGTGHQCS). In terms of domain architecture, EGF-like 5; calcium-binding spans 915 to 953 (DVDECAENRCHEAAICYNTPGSFSCRCQPGYRGDGFHCT). Positions 946–948 (RGD) match the Cell attachment site motif. Thyroglobulin type-1 domains are found at residues 965 to 1033 (LKPC…PPHC) and 1044 to 1112 (RTVC…RPAC). Positions 1021–1043 (GTQTPPGSTPPHCGPPPEPTQRP) are disordered. Over residues 1027-1040 (GSTPPHCGPPPEPT) the composition is skewed to pro residues. The N-linked (GlcNAc...) asparagine glycan is linked to N1152. LDL-receptor class B repeat units lie at residues 1182–1225 (RMVY…DHFR), 1226–1268 (RTMY…DPIR), 1269–1313 (GNLY…DPFS), 1314–1355 (KLLC…YADH), and 1357–1401 (YHTD…CPTG). R1336 is subject to Omega-N-methylarginine.

In terms of assembly, interacts with LAMA2. Interacts with COL13A1. Interacts with EFEMP2. Post-translationally, highly N- and O-glycosylated.

It is found in the secreted. The protein resides in the extracellular space. The protein localises to the extracellular matrix. Its subcellular location is the basement membrane. Functionally, cell adhesion glycoprotein. Might be involved in osteoblast differentiation. It probably has a role in cell-extracellular matrix interactions. This Mus musculus (Mouse) protein is Nidogen-2 (Nid2).